A 273-amino-acid polypeptide reads, in one-letter code: Dermonecrotic toxin LapSicTox-alphaIB1b3 (273 aa).

Residue H5 is part of the active site. Mg(2+)-binding residues include E25 and D27. The active-site Nucleophile is H41. 2 disulfide bridges follow: C45-C51 and C47-C190. D85 contacts Mg(2+). An N-linked (GlcNAc...) asparagine glycan is attached at N250.

The protein belongs to the arthropod phospholipase D family. Class II subfamily. Requires Mg(2+) as cofactor. In terms of tissue distribution, expressed by the venom gland.

It is found in the secreted. The catalysed reaction is an N-(acyl)-sphingosylphosphocholine = an N-(acyl)-sphingosyl-1,3-cyclic phosphate + choline. It carries out the reaction an N-(acyl)-sphingosylphosphoethanolamine = an N-(acyl)-sphingosyl-1,3-cyclic phosphate + ethanolamine. It catalyses the reaction a 1-acyl-sn-glycero-3-phosphocholine = a 1-acyl-sn-glycero-2,3-cyclic phosphate + choline. The enzyme catalyses a 1-acyl-sn-glycero-3-phosphoethanolamine = a 1-acyl-sn-glycero-2,3-cyclic phosphate + ethanolamine. Dermonecrotic toxins cleave the phosphodiester linkage between the phosphate and headgroup of certain phospholipids (sphingolipid and lysolipid substrates), forming an alcohol (often choline) and a cyclic phosphate. This toxin acts on sphingomyelin (SM). It may also act on ceramide phosphoethanolamine (CPE), lysophosphatidylcholine (LPC) and lysophosphatidylethanolamine (LPE), but not on lysophosphatidylserine (LPS), and lysophosphatidylglycerol (LPG). It acts by transphosphatidylation, releasing exclusively cyclic phosphate products as second products. Induces dermonecrosis, hemolysis, increased vascular permeability, edema, inflammatory response, and platelet aggregation. The chain is Dermonecrotic toxin LapSicTox-alphaIB1b3 from Loxosceles apachea (Apache recluse spider).